Here is a 363-residue protein sequence, read N- to C-terminus: Protein TAX-1 (363 aa).

The interval Arg129–Gln363 is required for localization to the flagellum and for flagellar motility. TPR repeat units lie at residues Ala157–Met190 and Thr199–His232.

In terms of assembly, interacts with TTC29.

The protein localises to the cytoplasm. It is found in the cytoskeleton. The protein resides in the flagellum axoneme. Functionally, required for flagellum motility. In Trypanosoma brucei brucei (strain 927/4 GUTat10.1), this protein is Protein TAX-1.